The chain runs to 756 residues: MLGICRGRRKFLAASLSLLCIPAITWIYLFSGSFEDGKPVSLSPLESQAHSPRYTASSQRERESLEVRMREVEEENRALRRQLSLAQGRAPSHRRGNHSKTYSMEEGTGDSENLRAGIVAGNSSECGQQPVVEKCETIHVAIVCAGYNASRDVVTLVKSVLFHRRNPLHFHLIADSIAEQILATLFQTWMVPAVRVDFYNADELKSEVSWIPNKHYSGIYGLMKLVLTKTLPANLERVIVLDTDITFATDIAELWAVFHKFKGQQVLGLVENQSDWYLGNLWKNHRPWPALGRGYNTGVILLLLDKLRKMKWEQMWRLTAERELMGMLSTSLADQDIFNAVIKQNPFLVYQLPCFWNVQLSDHTRSEQCYRDVSDLKVIHWNSPKKLRVKNKHVEFFRNLYLTFLEYDGNLLRRELFGCPSEADVNSENLQKQLSELDEDDLCYEFRRERFTVHRTHLYFLHYEYEPAADSTDVTLVAQLSMDRLQMLEAICKHWEGPISLALYLSDAEAQQFLRYAQGSEVLMSRHNVGYHIVYKEGQFYPVNLLRNVAMKHISTPYMFLSDIDFLPMYGLYEYLRKSVIQLDLANTKKAMIVPAFETLRYRLSFPKSKAELLSMLDMGTLFTFRYHVWTKGHAPTNFAKWRTATTPYRVEWEADFEPYVVVRRDCPEYDRRFVGFGWNKVAHIMELDVQEYEFIVLPNAYMIHMPHAPSFDITKFRSNKQYRICLKTLKEEFQQDMSRRYGFAALKYLTAENNS.

The Cytoplasmic portion of the chain corresponds to 1–10; it reads MLGICRGRRK. Residues 11 to 31 form a helical; Signal-anchor for type II membrane protein membrane-spanning segment; it reads FLAASLSLLCIPAITWIYLFS. Residues 32-756 are Lumenal-facing; the sequence is GSFEDGKPVS…LKYLTAENNS (725 aa). Disordered stretches follow at residues 43-69 and 81-109; these read SPLE…EVRM and RQLS…EGTG. Residues 44-58 show a composition bias toward polar residues; that stretch reads PLESQAHSPRYTASS. Positions 53 to 95 form a coiled coil; sequence RYTASSQRERESLEVRMREVEEENRALRRQLSLAQGRAPSHRR. A compositionally biased stretch (basic and acidic residues) spans 59–69; it reads QRERESLEVRM. N-linked (GlcNAc...) asparagine glycosylation is found at N97, N122, and N148. Positions 138-413 are xylosyltransferase activity; the sequence is IHVAIVCAGY…FLEYDGNLLR (276 aa). The Mn(2+) site is built by D242 and D244. The N-linked (GlcNAc...) asparagine glycan is linked to N272. The glucuronyltransferase activity stretch occupies residues 414–756; that stretch reads RELFGCPSEA…LKYLTAENNS (343 aa). 2 residues coordinate Mn(2+): D563 and D565.

It in the C-terminal section; belongs to the glycosyltransferase 49 family. This sequence in the N-terminal section; belongs to the glycosyltransferase 8 family. Interacts with DAG1 (via the N-terminal domain of alpha-DAG1); the interaction increases binding of DAG1 to laminin. Interacts with B4GAT1. It depends on Mn(2+) as a cofactor. As to expression, ubiquitous. Highest expression in heart, brain and skeletal muscle.

Its subcellular location is the golgi apparatus membrane. The catalysed reaction is 3-O-[beta-D-GlcA-(1-&gt;3)-beta-D-Xyl-(1-&gt;4)-Rib-ol-P-Rib-ol-P-3-beta-D-GalNAc-(1-&gt;3)-beta-D-GlcNAc-(1-&gt;4)-(O-6-P-alpha-D-Man)]-Thr-[protein] + UDP-alpha-D-xylose = 3-O-[alpha-D-Xyl-(1-&gt;3)-beta-D-GlcA-(1-&gt;4)-beta-D-Xyl-(1-&gt;4)-Rib-ol-P-Rib-ol-P-3-beta-D-GalNAc-(1-&gt;3)-beta-D-GlcNAc-(1-&gt;4)-(O-6-P-alpha-D-Man)]-Thr-[protein] + UDP + H(+). It carries out the reaction 3-O-{(1-&gt;[3)-alpha-D-Xyl-(1-&gt;3)-beta-D-GlcA-(1-&gt;](n)-4)-beta-D-Xyl-(1-&gt;4)-Rib-ol-P-Rib-ol-P-3-beta-D-GalNAc-(1-&gt;3)-beta-D-GlcNAc-(1-&gt;4)-O-6-P-alpha-D-Man}-L-Thr-[protein] + UDP-alpha-D-glucuronate = 3-O-{beta-D-GlcA-(1-&gt;[3)-alpha-D-Xyl-(1-&gt;3)-beta-D-GlcA-(1-&gt;](n)-4)-beta-D-Xyl-(1-&gt;4)-Rib-ol-P-Rib-ol-P-3-beta-D-GalNAc-(1-&gt;3)-beta-D-GlcNAc-(1-&gt;4)-O-6-P-alpha-D-Man}-L-Thr-[protein] + UDP + H(+). It catalyses the reaction 3-O-{beta-D-GlcA-(1-&gt;[3)-alpha-D-Xyl-(1-&gt;3)-beta-D-GlcA-(1-&gt;](n)-4)-beta-D-Xyl-(1-&gt;4)-Rib-ol-P-Rib-ol-P-3-beta-D-GalNAc-(1-&gt;3)-beta-D-GlcNAc-(1-&gt;4)-O-6-P-alpha-D-Man}-L-Thr-[protein] + UDP-alpha-D-xylose = 3-O-{(1-&gt;[3)-alpha-D-Xyl-(1-&gt;3)-beta-D-GlcA-(1-&gt;](n+1)-4)-beta-D-Xyl-(1-&gt;4)-Rib-ol-P-Rib-ol-P-3-beta-D-GalNAc-(1-&gt;3)-beta-D-GlcNAc-(1-&gt;4)-O-6-P-alpha-D-Man}-L-Thr-[protein] + UDP + H(+). Its pathway is protein modification; protein glycosylation. In terms of biological role, bifunctional glycosyltransferase with both alpha-1,3-xylosyltransferase and beta-1,3-glucuronyltransferase activities involved in the maturation of alpha-dystroglycan (DAG1) by glycosylation leading to DAG1 binding to laminin G-like domain-containing extracellular proteins with high affinity. Elongates the glucuronyl-beta-1,4-xylose-beta disaccharide primer structure initiated by B4GAT1 by adding repeating units [-3-Xylose-alpha-1,3-GlcA-beta-1-] to produce a heteropolysaccharide. Requires the phosphorylation of core M3 (O-mannosyl trisaccharide) by POMK to elongate the glucuronyl-beta-1,4-xylose-beta disaccharide primer. Plays a key role in skeletal muscle function and regeneration. The chain is Xylosyl- and glucuronyltransferase LARGE1 from Homo sapiens (Human).